The chain runs to 224 residues: Phosphoglycolate phosphatase (224 aa).

Residue D11 is the Nucleophile of the active site. Mg(2+) contacts are provided by D11, D13, and D177.

The protein belongs to the HAD-like hydrolase superfamily. CbbY/CbbZ/Gph/YieH family. Mg(2+) is required as a cofactor.

The catalysed reaction is 2-phosphoglycolate + H2O = glycolate + phosphate. Its pathway is organic acid metabolism; glycolate biosynthesis; glycolate from 2-phosphoglycolate: step 1/1. Its function is as follows. Specifically catalyzes the dephosphorylation of 2-phosphoglycolate. Is involved in the dissimilation of the intracellular 2-phosphoglycolate formed during the DNA repair of 3'-phosphoglycolate ends, a major class of DNA lesions induced by oxidative stress. The polypeptide is Phosphoglycolate phosphatase (Haemophilus influenzae (strain 86-028NP)).